We begin with the raw amino-acid sequence, 117 residues long: Large ribosomal subunit protein bL20 (117 aa).

Belongs to the bacterial ribosomal protein bL20 family.

Binds directly to 23S ribosomal RNA and is necessary for the in vitro assembly process of the 50S ribosomal subunit. It is not involved in the protein synthesizing functions of that subunit. This chain is Large ribosomal subunit protein bL20, found in Roseiflexus castenholzii (strain DSM 13941 / HLO8).